The sequence spans 308 residues: Acetaldehyde dehydrogenase 2 (308 aa).

Residue 9 to 12 coordinates NAD(+); sequence SGNI. Residue cysteine 127 is the Acyl-thioester intermediate of the active site. NAD(+) is bound by residues 158 to 166 and asparagine 286; that span reads SAGPGTRAN.

Belongs to the acetaldehyde dehydrogenase family.

It catalyses the reaction acetaldehyde + NAD(+) + CoA = acetyl-CoA + NADH + H(+). This chain is Acetaldehyde dehydrogenase 2, found in Parafrankia sp. (strain EAN1pec).